We begin with the raw amino-acid sequence, 382 residues long: Na(+)/H(+) antiporter NhaA (382 aa).

The next 11 helical transmembrane spans lie at 14–34 (AGGILLVIAAAIAMVIANSAM), 47–67 (FGMSVSHWINDGLMAVFFLLI), 87–107 (IFPAIAAVGGMLAPALIYVAF), 117–137 (GWAIPAATDIAFALGIMALLG), 146–166 (VFLLALAIIDDLGVVVIIALF), 171–191 (LSTIALTIGFIMTGVLFMLNA), 205–225 (LILWIAVLKSGVHATLAGVVI), 247–267 (ALHPYVAFAILPVFAFANAGI), 271–291 (GVSLAGLTSMLPLGVALGLFL), 321–341 (IFAVSVLCGIGFTMSIFISSL), and 353–373 (YARLGILMGSTTAALLGYSLL).

This sequence belongs to the NhaA Na(+)/H(+) (TC 2.A.33) antiporter family.

It localises to the cell inner membrane. It carries out the reaction Na(+)(in) + 2 H(+)(out) = Na(+)(out) + 2 H(+)(in). Functionally, na(+)/H(+) antiporter that extrudes sodium in exchange for external protons. The polypeptide is Na(+)/H(+) antiporter NhaA (Vibrio cholerae serotype O1 (strain ATCC 39541 / Classical Ogawa 395 / O395)).